Consider the following 224-residue polypeptide: Glutathione S-transferase U8 (224 aa).

In terms of domain architecture, GST N-terminal spans 5 to 85; sequence EHVKLLGLWG…YIEDTWKTTH (81 aa). Glutathione-binding positions include 15-16, 42-43, 56-57, and 69-70; these read SP, NR, KV, and ES. The region spanning 91-213 is the GST C-terminal domain; that stretch reads DPYERAMARF…LPPKEKLVAV (123 aa). A Phosphothreonine modification is found at Thr-152.

The protein belongs to the GST superfamily. Tau family.

It is found in the cytoplasm. The protein localises to the cytosol. It catalyses the reaction RX + glutathione = an S-substituted glutathione + a halide anion + H(+). Functionally, may be involved in the conjugation of reduced glutathione to a wide number of exogenous and endogenous hydrophobic electrophiles and have a detoxification role against certain herbicides. The polypeptide is Glutathione S-transferase U8 (GSTU8) (Arabidopsis thaliana (Mouse-ear cress)).